Consider the following 141-residue polypeptide: Cholinesterase (141 aa).

N39 is a glycosylation site (N-linked (GlcNAc...) asparagine). Position 49 to 50 (49 to 50) interacts with substrate; sequence GG. The active-site Acyl-ester intermediate is the S131. At S131 the chain carries Phosphoserine.

It belongs to the type-B carboxylesterase/lipase family. As to quaternary structure, homotetramer; disulfide-linked. Dimer of dimers. In terms of tissue distribution, present in most cells except erythrocytes.

It is found in the secreted. The catalysed reaction is an acylcholine + H2O = a carboxylate + choline + H(+). Functionally, esterase with broad substrate specificity. Contributes to the inactivation of the neurotransmitter acetylcholine. Can degrade neurotoxic organophosphate esters. The chain is Cholinesterase (BCHE) from Canis lupus familiaris (Dog).